A 546-amino-acid polypeptide reads, in one-letter code: Chaperonin GroEL (546 aa).

ATP is bound by residues 30-33 (TLGP), lysine 51, 87-91 (DGTTT), glycine 415, and aspartate 495.

This sequence belongs to the chaperonin (HSP60) family. As to quaternary structure, forms a cylinder of 14 subunits composed of two heptameric rings stacked back-to-back. Interacts with the co-chaperonin GroES.

It localises to the cytoplasm. It carries out the reaction ATP + H2O + a folded polypeptide = ADP + phosphate + an unfolded polypeptide.. In terms of biological role, together with its co-chaperonin GroES, plays an essential role in assisting protein folding. The GroEL-GroES system forms a nano-cage that allows encapsulation of the non-native substrate proteins and provides a physical environment optimized to promote and accelerate protein folding. The sequence is that of Chaperonin GroEL from Brucella suis (strain ATCC 23445 / NCTC 10510).